Consider the following 364-residue polypeptide: Chorismate synthase (364 aa).

An NADP(+)-binding site is contributed by R48. Residues 126-128 (RSS), G288, 303-307 (KPIAS), and R329 each bind FMN.

It belongs to the chorismate synthase family. In terms of assembly, homotetramer. FMNH2 is required as a cofactor.

It catalyses the reaction 5-O-(1-carboxyvinyl)-3-phosphoshikimate = chorismate + phosphate. It participates in metabolic intermediate biosynthesis; chorismate biosynthesis; chorismate from D-erythrose 4-phosphate and phosphoenolpyruvate: step 7/7. Its function is as follows. Catalyzes the anti-1,4-elimination of the C-3 phosphate and the C-6 proR hydrogen from 5-enolpyruvylshikimate-3-phosphate (EPSP) to yield chorismate, which is the branch point compound that serves as the starting substrate for the three terminal pathways of aromatic amino acid biosynthesis. This reaction introduces a second double bond into the aromatic ring system. This chain is Chorismate synthase, found in Desulfovibrio desulfuricans (strain ATCC 27774 / DSM 6949 / MB).